Reading from the N-terminus, the 258-residue chain is SLA class II histocompatibility antigen, DQ haplotype D beta chain (258 aa).

The signal sequence occupies residues 1–31; it reads MVALRLPRGLWTAALTVMLVVLGAPVAEGRD. The segment at 32–123 is beta-1; that stretch reads SPQDFVVQFK…IEEGTTLQRR (92 aa). The Extracellular segment spans residues 32-227; the sequence is SPQDFVVQFK…RAQSESAQSK (196 aa). 2 cysteine pairs are disulfide-bonded: C44–C108 and C146–C202. N48 carries an N-linked (GlcNAc...) asparagine glycan. The segment at 124 to 217 is beta-2; the sequence is VQPTVTISPS…SLQSPILVEW (94 aa). The Ig-like C1-type domain occupies 126–230; sequence PTVTISPSKA…SESAQSKMLS (105 aa). The interval 218–227 is connecting peptide; that stretch reads RAQSESAQSK. Residues 228–248 form a helical membrane-spanning segment; it reads MLSGVGGFVLGLIFLGLGLFI. The Cytoplasmic segment spans residues 249–258; it reads RHRSQKGLVR.

Belongs to the MHC class II family.

Its subcellular location is the membrane. The sequence is that of SLA class II histocompatibility antigen, DQ haplotype D beta chain from Sus scrofa (Pig).